A 318-amino-acid polypeptide reads, in one-letter code: Taste receptor type 2 member 60 (318 aa).

The Extracellular segment spans residues 1–7 (MNGDHMV). A helical transmembrane segment spans residues 8–28 (LGSSVTDKKAIILVTILLLLR). Residues 29–40 (LVAIAGNGFITA) are Cytoplasmic-facing. The helical transmembrane segment at 41–61 (ALGVEWVLRRMLLPCDKLLVS) threads the bilayer. Residues 62 to 88 (LGASHFCLQSVVMGKTIYVFLYPMAFP) lie on the Extracellular side of the membrane. Residues 89 to 109 (YNPVLQFLAFQWDFLNAATLW) traverse the membrane as a helical segment. Over 110–128 (FSTWLSVFYCVKIATFTHP) the chain is Cytoplasmic. Residues 129–149 (VFFWLKHKLSGWLPWMIFSYV) traverse the membrane as a helical segment. Residues 150 to 183 (GLSSFTTILFFIGNHRMYQNYLKNHLQPWNVTGN) lie on the Extracellular side of the membrane. An N-linked (GlcNAc...) asparagine glycan is attached at asparagine 179. The chain crosses the membrane as a helical span at residues 184-204 (SIRSYCEKFYLFPLKMITWTM). At 205–234 (PTAVFFICMILLITSLGRHMKKALLTTSGF) the chain is on the cytoplasmic side. Residues 235-255 (REPSVQAHIKALLALLSFAML) traverse the membrane as a helical segment. The Extracellular portion of the chain corresponds to 256 to 264 (FISYFLSLV). The chain crosses the membrane as a helical span at residues 265 to 285 (FSAAGIFPPLDFKFWVWESVI). Topologically, residues 286-318 (YLCAAVHPIILLFSNCRLRAVLKSRRSSRCGTP) are cytoplasmic.

The protein belongs to the G-protein coupled receptor T2R family.

Its subcellular location is the membrane. Its function is as follows. Receptor that may play a role in the perception of bitterness and is gustducin-linked. May play a role in sensing the chemical composition of the gastrointestinal content. The activity of this receptor may stimulate alpha gustducin, mediate PLC-beta-2 activation and lead to the gating of TRPM5. This is Taste receptor type 2 member 60 (TAS2R60) from Pan paniscus (Pygmy chimpanzee).